We begin with the raw amino-acid sequence, 138 residues long: Putative pre-16S rRNA nuclease (138 aa).

The protein belongs to the YqgF nuclease family.

The protein resides in the cytoplasm. Functionally, could be a nuclease involved in processing of the 5'-end of pre-16S rRNA. This Flavobacterium johnsoniae (strain ATCC 17061 / DSM 2064 / JCM 8514 / BCRC 14874 / CCUG 350202 / NBRC 14942 / NCIMB 11054 / UW101) (Cytophaga johnsonae) protein is Putative pre-16S rRNA nuclease.